An 876-amino-acid polypeptide reads, in one-letter code: AP-1 complex subunit gamma-1 (876 aa).

9 HEAT repeats span residues 97-135 (DERQ…ICSA), 136-173 (EMAR…KVPD), 248-284 (FLHI…KTES), 308-345 (SLRV…FDDQ), 346-382 (AVQR…ENNV), 384-417 (QLTK…KFSP), 418-454 (EKLW…NASE), 506-545 (VTES…RFPS), and 560-599 (SLLL…ATFN). One can recognise a GAE domain in the interval 756-873 (PAYAPIVAYE…LEEGQVSNFP (118 aa)).

Belongs to the adaptor complexes large subunit family. In terms of assembly, adaptor protein complex 1 (AP-1) is a heterotetramer composed of two large adaptins (gamma-type subunit and beta-type subunit), a medium adaptin (mu-type subunit) and a small adaptin (sigma-type subunit). Binds to EPSIN1. Interacts with DRP2A/ADL6 (via C-terminus).

It localises to the golgi apparatus. The protein localises to the cytoplasmic vesicle. Its subcellular location is the clathrin-coated vesicle membrane. In terms of biological role, subunit of clathrin-associated adaptor protein complex 1 that plays a role in protein sorting at the trans-Golgi network and early endosomes (TGN/EE). The AP complexes mediate both the recruitment of clathrin to membranes and the recognition of sorting signals within the cytosolic tails of transmembrane cargo molecules. The protein is AP-1 complex subunit gamma-1 (GAMMA-ADR) of Arabidopsis thaliana (Mouse-ear cress).